A 352-amino-acid polypeptide reads, in one-letter code: NAD-dependent protein deacetylase sirtuin-2 (352 aa).

The residue at position 16 (S16) is a Phosphoserine. The region spanning 20-301 is the Deacetylase sirtuin-type domain; sequence RLLDELTLEG…LALAELLGWK (282 aa). NAD(+)-binding positions include 48 to 52 and 58 to 60; these read AGIST and DFR. At S63 the chain carries Phosphoserine. Position 130–133 (130–133) interacts with NAD(+); it reads QNID. The active-site Proton acceptor is the H150. The Zn(2+) site is built by C158 and C163. S170 is subject to Phosphoserine. The Zn(2+) site is built by C184 and C187. NAD(+) contacts are provided by residues 225–226, 249–251, and C287; these read TS and NKE. Residues 314-352 form a disordered region; the sequence is SIDAQSGAGVPNPSTSASPKKSPPPAKDEARTTEREKPQ. Residues 324 to 333 show a composition bias toward low complexity; sequence PNPSTSASPK. A phosphoserine mark is found at S331 and S335. Basic and acidic residues predominate over residues 339 to 352; it reads AKDEARTTEREKPQ.

The protein belongs to the sirtuin family. Class I subfamily. As to quaternary structure, interacts with CDC20, FOXO3 and FZR1. Associates with microtubules in primary cortical mature neurons. Homotrimer. Interacts (via both phosphorylated, unphosphorylated, active or inactive forms) with HDAC6; the interaction is necessary for the complex to interact with alpha-tubulin, suggesting that these proteins belong to a large complex that deacetylates the cytoskeleton. Interacts with FOXO1; the interaction is disrupted upon serum-starvation or oxidative stress, leading to increased level of acetylated FOXO1 and induction of autophagy. Interacts with RELA; the interaction occurs in the cytoplasm and is increased in a TNF-alpha-dependent manner. Interacts with HOXA10; the interaction is direct. Interacts with YWHAB and YWHAG; the interactions occur in a AKT-dependent manner and increase SIRT2-dependent TP53 deacetylation. Interacts with MAPK1/ERK2 and MAPK3/ERK1; the interactions increase SIRT2 stability and deacetylation activity. Interacts (phosphorylated form) with KMT5A isoform 2; the interaction is direct, stimulates KMT5A-mediated methyltransferase activity on histone at 'Lys-20' (H4K20me1) and is increased in a H(2)O(2)-induced oxidative stress-dependent manner. Interacts with G6PD; the interaction is enhanced by H(2)O(2) treatment. Interacts with a G1/S-specific cyclin E-CDK2 complex. Interacts with AURKA, CDK5R1 (p35 form) and CDK5 and HIF1A. Interacts with the tRNA ligase SARS1; recruited to the VEGFA promoter via interaction with SARS1. Interacts with BEX4; negatively regulates alpha-tubulin deacetylation by SIRT2. Interacts with MORN3; the interaction enhances the ubiquitination of p53/TP53. The cofactor is Zn(2+). In terms of processing, phosphorylated at phosphoserine and phosphothreonine. Phosphorylated at Ser-331 by a mitotic kinase CDK1/cyclin B at the G2/M transition; phosphorylation regulates the delay in cell-cycle progression. Phosphorylated at Ser-331 by a mitotic kinase G1/S-specific cyclin E/Cdk2 complex; phosphorylation inactivates SIRT2-mediated alpha-tubulin deacetylation and thereby negatively regulates cell adhesion, cell migration and neurite outgrowth during neuronal differentiation. Phosphorylated by cyclin A/Cdk2 and p35-Cdk5 complexes and to a lesser extent by the cyclin D3/Cdk4 and cyclin B/Cdk1, in vitro. Dephosphorylated at Ser-331 by CDC14A and CDC14B around early anaphase. Acetylated by EP300; acetylation leads both to the decreased of SIRT2-mediated alpha-tubulin deacetylase activity and SIRT2-mediated down-regulation of TP53 transcriptional activity. Post-translationally, ubiquitinated.

It localises to the nucleus. The protein resides in the cytoplasm. The protein localises to the perinuclear region. Its subcellular location is the cytoskeleton. It is found in the microtubule organizing center. It localises to the centrosome. The protein resides in the centriole. The protein localises to the spindle. Its subcellular location is the midbody. It is found in the chromosome. It localises to the perikaryon. The protein resides in the cell projection. The protein localises to the growth cone. Its subcellular location is the myelin membrane. The enzyme catalyses N(6)-acetyl-L-lysyl-[protein] + NAD(+) + H2O = 2''-O-acetyl-ADP-D-ribose + nicotinamide + L-lysyl-[protein]. It carries out the reaction N(6)-tetradecanoyl-L-lysyl-[protein] + NAD(+) + H2O = 2''-O-tetradecanoyl-ADP-D-ribose + nicotinamide + L-lysyl-[protein]. The catalysed reaction is N(6)-hexadecanoyl-L-lysyl-[protein] + NAD(+) + H2O = 2''-O-hexadecanoyl-ADP-D-ribose + nicotinamide + L-lysyl-[protein]. Its activity is regulated as follows. Inhibited by Sirtinol, A3 and M15 small molecules. Inhibited by nicotinamide. Inhibited by a macrocyclic peptide inhibitor S2iL5. Inhibited by EP300-induced acetylation. Functionally, NAD-dependent protein deacetylase, which deacetylates internal lysines on histone and alpha-tubulin as well as many other proteins such as key transcription factors. Participates in the modulation of multiple and diverse biological processes such as cell cycle control, genomic integrity, microtubule dynamics, cell differentiation, metabolic networks, and autophagy. Plays a major role in the control of cell cycle progression and genomic stability. Functions in the antephase checkpoint preventing precocious mitotic entry in response to microtubule stress agents, and hence allowing proper inheritance of chromosomes. Positively regulates the anaphase promoting complex/cyclosome (APC/C) ubiquitin ligase complex activity by deacetylating CDC20 and FZR1, then allowing progression through mitosis. Associates both with chromatin at transcriptional start sites (TSSs) and enhancers of active genes. Plays a role in cell cycle and chromatin compaction through epigenetic modulation of the regulation of histone H4 'Lys-20' methylation (H4K20me1) during early mitosis. Specifically deacetylates histone H4 at 'Lys-16' (H4K16ac) between the G2/M transition and metaphase enabling H4K20me1 deposition by KMT5A leading to ulterior levels of H4K20me2 and H4K20me3 deposition throughout cell cycle, and mitotic S-phase progression. Deacetylates KMT5A modulating KMT5A chromatin localization during the mitotic stress response. Also deacetylates histone H3 at 'Lys-57' (H3K56ac) during the mitotic G2/M transition. During oocyte meiosis progression, may deacetylate histone H4 at 'Lys-16' (H4K16ac) and alpha-tubulin, regulating spindle assembly and chromosome alignment by influencing microtubule dynamics and kinetochore function. Deacetylates histone H4 at 'Lys-16' (H4K16ac) at the VEGFA promoter and thereby contributes to regulate expression of VEGFA, a key regulator of angiogenesis. Deacetylates alpha-tubulin at 'Lys-40' and hence controls neuronal motility, oligodendroglial cell arbor projection processes and proliferation of non-neuronal cells. Phosphorylation at Ser-368 by a G1/S-specific cyclin E-CDK2 complex inactivates SIRT2-mediated alpha-tubulin deacetylation, negatively regulating cell adhesion, cell migration and neurite outgrowth during neuronal differentiation. Deacetylates PARD3 and participates in the regulation of Schwann cell peripheral myelination formation during early postnatal development and during postinjury remyelination. Involved in several cellular metabolic pathways. Plays a role in the regulation of blood glucose homeostasis by deacetylating and stabilizing phosphoenolpyruvate carboxykinase PCK1 activity in response to low nutrient availability. Acts as a key regulator in the pentose phosphate pathway (PPP) by deacetylating and activating the glucose-6-phosphate G6PD enzyme, and therefore, stimulates the production of cytosolic NADPH to counteract oxidative damage. Maintains energy homeostasis in response to nutrient deprivation as well as energy expenditure by inhibiting adipogenesis and promoting lipolysis. Attenuates adipocyte differentiation by deacetylating and promoting FOXO1 interaction to PPARG and subsequent repression of PPARG-dependent transcriptional activity. Plays a role in the regulation of lysosome-mediated degradation of protein aggregates by autophagy in neuronal cells. Deacetylates FOXO1 in response to oxidative stress or serum deprivation, thereby negatively regulating FOXO1-mediated autophagy. Deacetylates a broad range of transcription factors and co-regulators regulating target gene expression. Deacetylates transcriptional factor FOXO3 stimulating the ubiquitin ligase SCF(SKP2)-mediated FOXO3 ubiquitination and degradation. Deacetylates HIF1A and therefore promotes HIF1A degradation and inhibition of HIF1A transcriptional activity in tumor cells in response to hypoxia. Deacetylates RELA in the cytoplasm inhibiting NF-kappaB-dependent transcription activation upon TNF-alpha stimulation. Inhibits transcriptional activation by deacetylating p53/TP53 and EP300. Also deacetylates EIF5A. Functions as a negative regulator on oxidative stress-tolerance in response to anoxia-reoxygenation conditions. Plays a role as tumor suppressor. In addition to protein deacetylase activity, also has activity toward long-chain fatty acyl groups and mediates protein-lysine demyristoylation and depalmitoylation of target proteins, such as ARF6 and KRAS, thereby regulating their association with membranes. The sequence is that of NAD-dependent protein deacetylase sirtuin-2 (SIRT2) from Pongo abelii (Sumatran orangutan).